Here is a 92-residue protein sequence, read N- to C-terminus: Small integral membrane protein 12 (92 aa).

The helical transmembrane segment at 15–34 threads the bilayer; the sequence is YVTFPVAFVVGAVGYHLEWF.

This sequence belongs to the SMIM12 family.

The protein resides in the membrane. This is Small integral membrane protein 12 (SMIM12) from Canis lupus familiaris (Dog).